Consider the following 307-residue polypeptide: Acetyl-coenzyme A carboxylase carboxyl transferase subunit beta (307 aa).

The region spanning 28 to 297 (LWVKCPDTGQ…TPEPGTAPEP (270 aa)) is the CoA carboxyltransferase N-terminal domain. The segment at 286 to 307 (RRTPEPGTAPEPTTPEPLPNAA) is disordered. Positions 292 to 307 (GTAPEPTTPEPLPNAA) are enriched in pro residues.

This sequence belongs to the AccD/PCCB family. In terms of assembly, acetyl-CoA carboxylase is a heterohexamer composed of biotin carboxyl carrier protein (AccB), biotin carboxylase (AccC) and two subunits each of ACCase subunit alpha (AccA) and ACCase subunit beta (AccD).

It is found in the cytoplasm. The enzyme catalyses N(6)-carboxybiotinyl-L-lysyl-[protein] + acetyl-CoA = N(6)-biotinyl-L-lysyl-[protein] + malonyl-CoA. It functions in the pathway lipid metabolism; malonyl-CoA biosynthesis; malonyl-CoA from acetyl-CoA: step 1/1. In terms of biological role, component of the acetyl coenzyme A carboxylase (ACC) complex. Biotin carboxylase (BC) catalyzes the carboxylation of biotin on its carrier protein (BCCP) and then the CO(2) group is transferred by the transcarboxylase to acetyl-CoA to form malonyl-CoA. This Methylorubrum extorquens (strain ATCC 14718 / DSM 1338 / JCM 2805 / NCIMB 9133 / AM1) (Methylobacterium extorquens) protein is Acetyl-coenzyme A carboxylase carboxyl transferase subunit beta.